The sequence spans 225 residues: NAD(P)H-quinone oxidoreductase subunit K, chloroplastic (225 aa).

Cys-43, Cys-44, Cys-108, and Cys-139 together coordinate [4Fe-4S] cluster.

It belongs to the complex I 20 kDa subunit family. NDH is composed of at least 16 different subunits, 5 of which are encoded in the nucleus. [4Fe-4S] cluster serves as cofactor.

The protein resides in the plastid. It localises to the chloroplast thylakoid membrane. It carries out the reaction a plastoquinone + NADH + (n+1) H(+)(in) = a plastoquinol + NAD(+) + n H(+)(out). It catalyses the reaction a plastoquinone + NADPH + (n+1) H(+)(in) = a plastoquinol + NADP(+) + n H(+)(out). Its function is as follows. NDH shuttles electrons from NAD(P)H:plastoquinone, via FMN and iron-sulfur (Fe-S) centers, to quinones in the photosynthetic chain and possibly in a chloroplast respiratory chain. The immediate electron acceptor for the enzyme in this species is believed to be plastoquinone. Couples the redox reaction to proton translocation, and thus conserves the redox energy in a proton gradient. This is NAD(P)H-quinone oxidoreductase subunit K, chloroplastic from Olimarabidopsis pumila (Dwarf rocket).